The sequence spans 464 residues: Sensor histidine kinase Hik34 (464 aa).

The Histidine kinase domain maps to 235–449; it reads ALTHEVRTPL…ILTIYLKCEQ (215 aa). Position 238 is a phosphohistidine; by autocatalysis (histidine 238).

When expressed in E.coli autophosphorylates at 18 to 30 degrees Celsius; less phosphorylation occurs at 36 and none occurs at 42 or 48 degrees Celsius.

It carries out the reaction ATP + protein L-histidine = ADP + protein N-phospho-L-histidine.. Member of a two-component system Hik34/Rre1, controlling expression of at least 20 genes in response to hyperosmotic stress (0.5 M sorbitol) or salt (0.5 M NaCl). Represses expression of heat shock genes under normal growth conditions. Required for survival of long-term heat shock exposure. This Synechocystis sp. (strain ATCC 27184 / PCC 6803 / Kazusa) protein is Sensor histidine kinase Hik34.